A 220-amino-acid polypeptide reads, in one-letter code: Glutathione S-transferase 2 (220 aa).

The 87-residue stretch at 2 to 88 folds into the GST N-terminal domain; the sequence is VVTLGYWDIR…YIARKHNMCG (87 aa). Glutathione-binding positions include 7–8, 43–46, lysine 50, 59–60, and 72–73; these read YW, PSDW, NL, and QS. Positions 90 to 208 constitute a GST C-terminal domain; that stretch reads TEVEKQRVDV…RSGRFMKAPI (119 aa). Tyrosine 116 provides a ligand contact to substrate.

The protein belongs to the GST superfamily. Mu family. Homodimer.

The protein localises to the cytoplasm. The enzyme catalyses RX + glutathione = an S-substituted glutathione + a halide anion + H(+). Conjugation of reduced glutathione to a wide number of exogenous and endogenous hydrophobic electrophiles. Participates in the formation of novel hepoxilin regioisomers. This Gallus gallus (Chicken) protein is Glutathione S-transferase 2 (GSTM2).